Reading from the N-terminus, the 187-residue chain is Large ribosomal subunit protein uL5 (187 aa).

The protein belongs to the universal ribosomal protein uL5 family. Part of the 50S ribosomal subunit; part of the 5S rRNA/L5/L18/L25 subcomplex. Contacts the 5S rRNA and the P site tRNA. Forms a bridge to the 30S subunit in the 70S ribosome.

In terms of biological role, this is one of the proteins that bind and probably mediate the attachment of the 5S RNA into the large ribosomal subunit, where it forms part of the central protuberance. In the 70S ribosome it contacts protein S13 of the 30S subunit (bridge B1b), connecting the 2 subunits; this bridge is implicated in subunit movement. Contacts the P site tRNA; the 5S rRNA and some of its associated proteins might help stabilize positioning of ribosome-bound tRNAs. The chain is Large ribosomal subunit protein uL5 from Roseobacter denitrificans (strain ATCC 33942 / OCh 114) (Erythrobacter sp. (strain OCh 114)).